We begin with the raw amino-acid sequence, 274 residues long: Putative septum site-determining protein MinD (274 aa).

Position 22–29 (22–29) interacts with ATP; it reads KGGVGKTT.

This sequence belongs to the ParA family. MinD subfamily.

It localises to the plastid. Its subcellular location is the chloroplast. ATPase required for the correct placement of the division site. This chain is Putative septum site-determining protein MinD (minD-A), found in Nephroselmis olivacea (Green alga).